The chain runs to 266 residues: Mediator of RNA polymerase II transcription subunit 18 (266 aa).

It belongs to the Mediator complex subunit 18 family. Component of the Mediator complex.

The protein resides in the nucleus. Its function is as follows. Component of the Mediator complex, a coactivator involved in the regulated transcription of nearly all RNA polymerase II-dependent genes. Mediator functions as a bridge to convey information from gene-specific regulatory proteins to the basal RNA polymerase II transcription machinery. Mediator is recruited to promoters by direct interactions with regulatory proteins and serves as a scaffold for the assembly of a functional preinitiation complex with RNA polymerase II and the general transcription factors. The polypeptide is Mediator of RNA polymerase II transcription subunit 18 (SRB5) (Candida glabrata (strain ATCC 2001 / BCRC 20586 / JCM 3761 / NBRC 0622 / NRRL Y-65 / CBS 138) (Yeast)).